We begin with the raw amino-acid sequence, 561 residues long: FAD-binding monooxygenase tazF (561 aa).

Residues 74–77 (TWLD), 86–87 (DI), and Tyr-92 each bind FAD. 84–86 (GCD) serves as a coordination point for NADP(+). NADP(+)-binding positions include 212–218 (NGSSALQ) and 235–236 (RH).

The protein belongs to the FAD-binding monooxygenase family. FAD serves as cofactor.

It functions in the pathway secondary metabolite biosynthesis. FAD-binding monooxygenase; part of the gene cluster that mediates the biosynthesis of azaterrilone A and other azaphilones, a class of fungal metabolites characterized by a highly oxygenated pyrano-quinone bicyclic core and exhibiting a broad range of bioactivities. The first step of the pathway begins with the non-reducing polyketide synthase tazA that assembles one acetyl-CoA starter unit, five malonyl-CoA units, and catalyzes a series of Claisen condensations, methylation, PT-mediated cyclization, and finally releases the first hexaketide precursor through the R-domain. The tazA product then undergoes reduction on its terminal ketone and the following pyran-ring formation by yet undetermined enzyme(s). Dehydration and enoyl reduction, possibly involving the trans-enoyl reductase tazE leads to the next intermediate. TazD is predicted as an acetyltransferase and might catalyze the acetylation steps leading to the synthesis of azaterrilone A. Azaterrilone A is not the final product of the taz pathway and both the highly reducing polyketide synthase tazB and the dual enzyme tazHJ catalyze late steps of the pathway, leading to the production of the 2 final stereoisomers that contain additional polyketide modification whose structures have still to be determined. This chain is FAD-binding monooxygenase tazF, found in Aspergillus terreus (strain NIH 2624 / FGSC A1156).